An 857-amino-acid chain; its full sequence is DNA gyrase subunit A (857 aa).

The Topo IIA-type catalytic domain occupies 39–507 (LPDVRDGLKP…YEGDMSIEDL (469 aa)). Tyr-127 serves as the catalytic O-(5'-phospho-DNA)-tyrosine intermediate. Positions 534 to 540 (QKRGGKG) match the GyrA-box motif. Residues 825–857 (REAEEVDGDVAVDETAEGAATTGTDEGEAPSAE) are disordered. Over residues 828-840 (EEVDGDVAVDETA) the composition is skewed to acidic residues.

Belongs to the type II topoisomerase GyrA/ParC subunit family. As to quaternary structure, heterotetramer, composed of two GyrA and two GyrB chains. In the heterotetramer, GyrA contains the active site tyrosine that forms a transient covalent intermediate with DNA, while GyrB binds cofactors and catalyzes ATP hydrolysis.

It is found in the cytoplasm. It catalyses the reaction ATP-dependent breakage, passage and rejoining of double-stranded DNA.. A type II topoisomerase that negatively supercoils closed circular double-stranded (ds) DNA in an ATP-dependent manner to modulate DNA topology and maintain chromosomes in an underwound state. Negative supercoiling favors strand separation, and DNA replication, transcription, recombination and repair, all of which involve strand separation. Also able to catalyze the interconversion of other topological isomers of dsDNA rings, including catenanes and knotted rings. Type II topoisomerases break and join 2 DNA strands simultaneously in an ATP-dependent manner. The chain is DNA gyrase subunit A from Streptomyces coelicolor (strain ATCC BAA-471 / A3(2) / M145).